A 118-amino-acid chain; its full sequence is Na(+)/H(+) antiporter subunit G1 (118 aa).

Transmembrane regions (helical) follow at residues 9–29 (VSII…TGLI), 47–67 (LGAM…EGYV), and 69–89 (MQLI…SHLI).

Belongs to the CPA3 antiporters (TC 2.A.63) subunit G family. In terms of assembly, may form a heterooligomeric complex that consists of seven subunits: mnhA1, mnhB1, mnhC1, mnhD1, mnhE1, mnhF1 and mnhG1.

The protein localises to the cell membrane. In terms of biological role, mnh complex is a Na(+)/H(+) antiporter involved in Na(+) excretion. This chain is Na(+)/H(+) antiporter subunit G1 (mnhG1), found in Staphylococcus epidermidis (strain ATCC 35984 / DSM 28319 / BCRC 17069 / CCUG 31568 / BM 3577 / RP62A).